The sequence spans 110 residues: U1-lycotoxin-Ls1ii (110 aa).

The signal sequence occupies residues 1–20 (MKFVLLFGVLLVTLFSYSSA). Positions 21 to 44 (EMLDDFDQADEDELLSLIEKEEAR) are excised as a propeptide. Disulfide bonds link cysteine 47–cysteine 62, cysteine 54–cysteine 71, cysteine 61–cysteine 89, and cysteine 73–cysteine 87.

It belongs to the neurotoxin 19 (CSTX) family. 03 subfamily. As to expression, expressed by the venom gland.

The protein localises to the secreted. This is U1-lycotoxin-Ls1ii from Lycosa singoriensis (Wolf spider).